We begin with the raw amino-acid sequence, 127 residues long: Large ribosomal subunit protein bL19 (127 aa).

The protein belongs to the bacterial ribosomal protein bL19 family.

In terms of biological role, this protein is located at the 30S-50S ribosomal subunit interface and may play a role in the structure and function of the aminoacyl-tRNA binding site. The sequence is that of Large ribosomal subunit protein bL19 from Trichodesmium erythraeum (strain IMS101).